The sequence spans 217 residues: Putative 3-methyladenine DNA glycosylase (217 aa).

The RPE2 insert domain maps to 105–145; it reads SHNNVYTIDTAKIKSQITDEKTQSIIIRKNRRIMKFYIPNL.

The protein belongs to the DNA glycosylase MPG family.

The polypeptide is Putative 3-methyladenine DNA glycosylase (Rickettsia prowazekii (strain Madrid E)).